A 339-amino-acid chain; its full sequence is Probable protein phosphatase 2C 28 (339 aa).

Residues 87–334 (DHGYHLVKGQ…DDISCVVVSF (248 aa)) enclose the PPM-type phosphatase domain. Mn(2+) contacts are provided by Asp-124, Gly-125, Asp-286, and Asp-325.

The protein belongs to the PP2C family. It depends on Mg(2+) as a cofactor. The cofactor is Mn(2+).

It catalyses the reaction O-phospho-L-seryl-[protein] + H2O = L-seryl-[protein] + phosphate. The catalysed reaction is O-phospho-L-threonyl-[protein] + H2O = L-threonyl-[protein] + phosphate. The chain is Probable protein phosphatase 2C 28 from Arabidopsis thaliana (Mouse-ear cress).